The chain runs to 1290 residues: MAGVGTPCANGCGPSAPSEAEVLHLCRSLEVGTVMTLFYSKKSQRPERKTFQVKLETRQITWSRGADKIEGSIDIREIKEIRPGKTSRDFDRYQEDPAFRPDQSHCFVILYGMEFRLKTLSLQATSEDEVNMWIKGLTWLMEDTLQAATPLQIERWLRKQFYSVDRNREDRISAKDLKNMLSQVNYRVPNMRFLRERLTDFEQRSGDITYGQFAQLYRSLMYSAQKTMDLPFLETNTLRTGERPELCQVSLSEFQQFLLEYQGELWAVDRLQVQEFMLSFLRDPLREIEEPYFFLDELVTFLFSKENSVWNSQLDAVCPETMNNPLSHYWISSSHNTYLTGDQFSSESSLEAYARCLRMGCRCIELDCWDGPDGMPVIYHGHTLTTKIKFSDVLHTIKEHAFVASEYPVILSIEDHCSIAQQRNMAQHFRKVLGDTLLTKPVDIAADGLPSPNQLKRKILIKHKKLAEGSAYEEVPTSVMYSENDISNSIKNGILYLEDPVNHEWYPHYFVLTSSKIYYSEETSSDQGNEDEEEPKEASGSTELHSSEKWFHGKLGAGRDGRHIAERLLTEYCIETGAPDGSFLVRESETFVGDYTLSFWRNGKVQHCRIHSRQDAGTPKFFLTDNLVFDSLYDLITHYQQVPLRCNEFEMRLSEPVPQTNAHESKEWYHASLTRAQAEHMLMRVPRDGAFLVRKRNEPNSYAISFRAEGKIKHCRVQQEGQTVMLGNSEFDSLVDLISYYEKHPLYRKMKLRYPINEEALEKIGTAEPDYGALYEGRNPGFYVEANPMPTFKCAVKALFDYKAQREDELTFTKSAIIQNVEKQDGGWWRGDYGGKKQLWFPSNYVEEMINPAILEPEREHLDENSPLGDLLRGVLDVPACQIAIRPEGKNNRLFVFSISMPSVAQWSLDVAADSQEELQDWVKKIREVAQTADARLTEGKMMERRKKIALELSELVVYCRPVPFDEEKIGTERACYRDMSSFPETKAEKYVNKAKGKKFLQYNRLQLSRIYPKGQRLDSSNYDPLPMWICGSQLVALNFQTPDKPMQMNQALFMAGGHCGYVLQPSTMRDEAFDPFDKSSLRGLEPCVICIEVLGARHLPKNGRGIVCPFVEIEVAGAEYDSTKQKTEFVVDNGLNPVWPAKPFHFQISNPEFAFLRFVVYEEDMFSDQNFLAQATFPVKGLKTGYRAVPLKNNYSEDLELASLLIKIDIFPAKENGDLSPFSGTSLRERASDASSQLFHVRAREGSFEARYQQPFEDFRISQEHLADHFDSRERRAPRRTRVNGDNRL.

The residue at position 2 (alanine 2) is an N-acetylalanine. Residues 27–142 enclose the PH 1 domain; the sequence is RSLEVGTVMT…WIKGLTWLME (116 aa). One can recognise an EF-hand domain in the interval 152 to 187; sequence QIERWLRKQFYSVDRNREDRISAKDLKNMLSQVNYR. Ca(2+)-binding residues include aspartate 165, asparagine 167, glutamate 169, arginine 171, and aspartate 176. The region spanning 320–464 is the PI-PLC X-box domain; sequence ETMNNPLSHY…LKRKILIKHK (145 aa). Catalysis depends on residues histidine 335 and histidine 380. Residues 489 to 523 form the PH 2; first part domain; the sequence is SIKNGILYLEDPVNHEWYPHYFVLTSSKIYYSEET. Residue tyrosine 506 is modified to Phosphotyrosine. Positions 522 to 546 are disordered; that stretch reads ETSSDQGNEDEEEPKEASGSTELHS. SH2 domains follow at residues 550–657 and 668–756; these read WFHG…SEPV and WYHA…RYPI. Tyrosine 771 is subject to Phosphotyrosine; by SYK. Tyrosine 775 is modified (phosphotyrosine). Tyrosine 783 is subject to Phosphotyrosine; by ITK, SYK and TXK. The region spanning 791 to 851 is the SH3 domain; sequence TFKCAVKALF…PSNYVEEMIN (61 aa). The region spanning 895 to 931 is the PH 2; second part domain; it reads FVFSISMPSVAQWSLDVAADSQEELQDWVKKIREVAQ. Residues 953–1070 form the PI-PLC Y-box domain; that stretch reads LSELVVYCRP…GYVLQPSTMR (118 aa). Residue tyrosine 977 is modified to Phosphotyrosine. Positions 1071-1194 constitute a C2 domain; it reads DEAFDPFDKS…TGYRAVPLKN (124 aa). Serine 1221, serine 1227, serine 1233, and serine 1248 each carry phosphoserine. At tyrosine 1253 the chain carries Phosphotyrosine. Serine 1263 bears the Phosphoserine mark. The tract at residues 1271–1290 is disordered; sequence FDSRERRAPRRTRVNGDNRL.

In terms of assembly, interacts with AGAP2 via its SH3 domain. Interacts (via SH2 domain) with RET. Interacts with FLT1 (tyrosine-phosphorylated). Interacts (via SH2 domain) with FGFR1, FGFR2, FGFR3 and FGFR4 (phosphorylated). Interacts with LAT (phosphorylated) upon TCR activation. Interacts (via SH3 domain) with the Pro-rich domain of TNK1. Associates with BLNK, VAV1, GRB2 and NCK1 in a B-cell antigen receptor-dependent fashion. Interacts with CBLB in activated T-cells; which inhibits phosphorylation. Interacts with SHB. Interacts (via SH3 domain) with the Arg/Gly-rich-flanked Pro-rich domains of KHDRBS1/SAM68. This interaction is selectively regulated by arginine methylation of KHDRBS1/SAM68. Interacts with INPP5D/SHIP1, THEMIS and CLNK. Interacts with AXL, FLT4 and KIT. Interacts with RALGPS1. Interacts (via the SH2 domains) with VIL1 (phosphorylated at C-terminus tyrosine phosphorylation sites). Interacts (via SH2 domain) with PDGFRA and PDGFRB (tyrosine phosphorylated). Interacts with PIP5K1C. Interacts with NTRK1 and NTRK2 (phosphorylated upon ligand-binding). Interacts with SYK; activates PLCG1. Interacts with GRB2, LAT and THEMIS upon TCR activation in thymocytes. Interacts with TESPA1; the association is increased with prolonged stimulation of the TCR and may facilitate the assembly of the LAT signalosome. Interacts (via C-terminal proline-rich domain (PRD)) with PLCG1 (via SH3 domain); this interaction leads to guanine nucleotide exchange from PlCG1 to DNM1 and enhances DNM1-dependent endocytosis. It depends on Ca(2+) as a cofactor. In terms of processing, ubiquitinated by CBLB in activated T-cells. Post-translationally, tyrosine phosphorylated in response to signaling via activated FLT3, KIT and PDGFRA. Tyrosine phosphorylated by activated FGFR1, FGFR2, FGFR3 and FGFR4. Tyrosine phosphorylated by activated FLT1 and KDR. Tyrosine phosphorylated by activated PDGFRB. The receptor-mediated activation of PLCG1 involves its phosphorylation by tyrosine kinases, in response to ligation of a variety of growth factor receptors and immune system receptors. For instance, SYK phosphorylates and activates PLCG1 in response to ligation of the B-cell receptor. May be dephosphorylated by PTPRJ. Phosphorylated by ITK and TXK on Tyr-783 upon TCR activation in T-cells.

The protein localises to the cell projection. It is found in the lamellipodium. Its subcellular location is the ruffle. It catalyses the reaction a 1,2-diacyl-sn-glycero-3-phospho-(1D-myo-inositol-4,5-bisphosphate) + H2O = 1D-myo-inositol 1,4,5-trisphosphate + a 1,2-diacyl-sn-glycerol + H(+). The catalysed reaction is a 1,2-diacyl-sn-glycero-3-phospho-(1D-myo-inositol) + H2O = 1D-myo-inositol 1-phosphate + a 1,2-diacyl-sn-glycerol + H(+). Activated by phosphorylation on tyrosine residues. Its function is as follows. Mediates the production of the second messenger molecules diacylglycerol (DAG) and inositol 1,4,5-trisphosphate (IP3). Plays an important role in the regulation of intracellular signaling cascades. Becomes activated in response to ligand-mediated activation of receptor-type tyrosine kinases, such as PDGFRA, PDGFRB, EGFR, FGFR1, FGFR2, FGFR3 and FGFR4. Plays a role in actin reorganization and cell migration. Guanine nucleotide exchange factor that binds the GTPase DNM1 and catalyzes the dissociation of GDP, allowing a GTP molecule to bind in its place, therefore enhancing DNM1-dependent endocytosis. The sequence is that of 1-phosphatidylinositol 4,5-bisphosphate phosphodiesterase gamma-1 from Rattus norvegicus (Rat).